Consider the following 156-residue polypeptide: MTDADELAAVAARTFPLACPPAVAPEHIASFVDANLSSARFAEYLTDPRRAILTARHDGRIVGYAMLIRGDDRDVELSKLYLLPGYHGTGAAAALMHKVLATAADWGALRVWLGVNQKNQRAQRFYAKTGFKINGTRTFRLGAHHENDYVMVRELV.

The N-acetyltransferase domain occupies 10–156 (VAARTFPLAC…NDYVMVRELV (147 aa)).

It belongs to the acetyltransferase family.

This is an uncharacterized protein from Mycobacterium bovis (strain ATCC BAA-935 / AF2122/97).